The sequence spans 179 residues: Acireductone dioxygenase (179 aa).

His-85, His-87, Glu-91, and His-132 together coordinate Fe(2+). Positions 85, 87, 91, and 132 each coordinate Ni(2+).

The protein belongs to the acireductone dioxygenase (ARD) family. The cofactor is Fe(2+). Requires Ni(2+) as cofactor.

It localises to the cytoplasm. The protein resides in the nucleus. It carries out the reaction 1,2-dihydroxy-5-(methylsulfanyl)pent-1-en-3-one + O2 = 4-methylsulfanyl-2-oxobutanoate + formate + 2 H(+). The enzyme catalyses 1,2-dihydroxy-5-(methylsulfanyl)pent-1-en-3-one + O2 = 3-(methylsulfanyl)propanoate + CO + formate + 2 H(+). It functions in the pathway amino-acid biosynthesis; L-methionine biosynthesis via salvage pathway; L-methionine from S-methyl-5-thio-alpha-D-ribose 1-phosphate: step 5/6. Catalyzes 2 different reactions between oxygen and the acireductone 1,2-dihydroxy-3-keto-5-methylthiopentene (DHK-MTPene) depending upon the metal bound in the active site. Fe-containing acireductone dioxygenase (Fe-ARD) produces formate and 2-keto-4-methylthiobutyrate (KMTB), the alpha-ketoacid precursor of methionine in the methionine recycle pathway. Ni-containing acireductone dioxygenase (Ni-ARD) produces methylthiopropionate, carbon monoxide and formate, and does not lie on the methionine recycle pathway. The protein is Acireductone dioxygenase of Saccharomyces cerevisiae (strain ATCC 204508 / S288c) (Baker's yeast).